A 422-amino-acid chain; its full sequence is Probable protein phosphatase 2C 69 (422 aa).

A PPM-type phosphatase domain is found at 45–294; it reads TLLLAEAGER…DDTTCIVVDI (250 aa). Mn(2+) contacts are provided by aspartate 70, glycine 71, aspartate 246, and aspartate 285.

This sequence belongs to the PP2C family. The cofactor is Mg(2+). It depends on Mn(2+) as a cofactor.

The catalysed reaction is O-phospho-L-seryl-[protein] + H2O = L-seryl-[protein] + phosphate. It catalyses the reaction O-phospho-L-threonyl-[protein] + H2O = L-threonyl-[protein] + phosphate. The sequence is that of Probable protein phosphatase 2C 69 from Oryza sativa subsp. japonica (Rice).